The chain runs to 738 residues: Coiled-coil domain-containing protein 142 (738 aa).

A disordered region spans residues 1–34; sequence MARASSSSGPLPPLANVPSSWAQPVGAGEERDEG. Positions 69-92 form a coiled coil; it reads ALQRLRATLLRLHREREQLLRARD. A disordered region spans residues 682 to 704; the sequence is LSTLGGGGRGGGGGGGPGPSPEA. Gly residues predominate over residues 685–698; sequence LGGGGRGGGGGGGP.

This chain is Coiled-coil domain-containing protein 142 (Ccdc142), found in Mus musculus (Mouse).